Here is a 359-residue protein sequence, read N- to C-terminus: ATPase ASNA1 homolog (359 aa).

23–30 is a binding site for ATP; that stretch reads KGGVGKTT. The active site involves D63. Residues E252 and N279 each contribute to the ATP site. 2 residues coordinate Zn(2+): C291 and C294.

It belongs to the arsA ATPase family. Homodimer.

The protein resides in the cytoplasm. Its subcellular location is the endoplasmic reticulum. Functionally, ATPase required for the post-translational delivery of tail-anchored (TA) proteins to the endoplasmic reticulum. Recognizes and selectively binds the transmembrane domain of TA proteins in the cytosol. This complex then targets to the endoplasmic reticulum by membrane-bound receptors, where the tail-anchored protein is released for insertion. This process is regulated by ATP binding and hydrolysis. ATP binding drives the homodimer towards the closed dimer state, facilitating recognition of newly synthesized TA membrane proteins. ATP hydrolysis is required for insertion. Subsequently, the homodimer reverts towards the open dimer state, lowering its affinity for the membrane-bound receptor, and returning it to the cytosol to initiate a new round of targeting. This is ATPase ASNA1 homolog from Trypanosoma cruzi (strain CL Brener).